The following is a 297-amino-acid chain: Mitochondrial nicotinamide adenine dinucleotide transporter SLC25A51 (297 aa).

Residues 1 to 11 (MMDSEAHEKRP) show a composition bias toward basic and acidic residues. Residues 1–20 (MMDSEAHEKRPPILTSSKQD) are disordered. Solcar repeat units lie at residues 28 to 108 (VGEM…LSCL), 116 to 200 (PEFA…IKEH), and 213 to 296 (NDFI…LLKV). Transmembrane regions (helical) follow at residues 36 to 56 (CGCCAAFNNVAITFPIQKVLF), 85 to 105 (LPPLMQKTTTLALMFGLYEDL), 116 to 135 (PEFATSGVAAVLAGTTEAIF), 179 to 199 (ILFRNGLSNVLFFGLRGPIKE), 215 to 235 (FICGGLLGAMLGFLFFPINVV), and 268 to 289 (LFRGAHLNYHRSLISWGIINAT).

The protein belongs to the mitochondrial carrier (TC 2.A.29) family.

It localises to the mitochondrion inner membrane. The enzyme catalyses NAD(+)(in) = NAD(+)(out). Mitochondrial membrane carrier protein that mediates the import of NAD(+) into mitochondria. Mitochondrial NAD(+) is required for glycolysis and mitochondrial respiration. Compared to SLC25A52, SLC25A51-mediated transport is essential for the import of NAD(+) in mitochondria. The transport mechanism, uniport or antiport, its electrogenicity and substrate selectivity, remain to be elucidated. The polypeptide is Mitochondrial nicotinamide adenine dinucleotide transporter SLC25A51 (Homo sapiens (Human)).